Consider the following 955-residue polypeptide: UvrABC system protein A (955 aa).

35 to 42 (GLSGSGKS) serves as a coordination point for ATP. ABC transporter domains are found at residues 322-601 (WGST…EESI) and 621-951 (GHDN…RYLK). 654–661 (GVSGSGKS) contributes to the ATP binding site. A C4-type zinc finger spans residues 754-780 (CEACQGDGLIKIEMHFLPDVYVKCDIC).

This sequence belongs to the ABC transporter superfamily. UvrA family. In terms of assembly, forms a heterotetramer with UvrB during the search for lesions.

The protein localises to the cytoplasm. Functionally, the UvrABC repair system catalyzes the recognition and processing of DNA lesions. UvrA is an ATPase and a DNA-binding protein. A damage recognition complex composed of 2 UvrA and 2 UvrB subunits scans DNA for abnormalities. When the presence of a lesion has been verified by UvrB, the UvrA molecules dissociate. The sequence is that of UvrABC system protein A from Rickettsia felis (strain ATCC VR-1525 / URRWXCal2) (Rickettsia azadi).